Here is a 236-residue protein sequence, read N- to C-terminus: Large ribosomal subunit protein uL1 (236 aa).

The protein belongs to the universal ribosomal protein uL1 family. Part of the 50S ribosomal subunit.

In terms of biological role, binds directly to 23S rRNA. The L1 stalk is quite mobile in the ribosome, and is involved in E site tRNA release. Its function is as follows. Protein L1 is also a translational repressor protein, it controls the translation of the L11 operon by binding to its mRNA. This Corynebacterium glutamicum (strain R) protein is Large ribosomal subunit protein uL1.